The following is a 511-amino-acid chain: Maturase K (511 aa).

The protein belongs to the intron maturase 2 family. MatK subfamily.

It is found in the plastid. Its subcellular location is the chloroplast. In terms of biological role, usually encoded in the trnK tRNA gene intron. Probably assists in splicing its own and other chloroplast group II introns. This chain is Maturase K, found in Anchomanes difformis (Amorphophallus difformis).